We begin with the raw amino-acid sequence, 242 residues long: AA9 family lytic polysaccharide monooxygenase F (242 aa).

A signal peptide spans 1–20 (MVQFKLSTASLLALASYAAA). Position 21 (histidine 21) interacts with Cu(2+). The tract at residues 31 to 53 (GQTYPGADPHNPNPESPGWQAEN) is disordered. 2 disulfides stabilise this stretch: cysteine 71-cysteine 192 and cysteine 112-cysteine 116. A Cu(2+)-binding site is contributed by histidine 101. The O2 site is built by histidine 178 and glutamine 187. Tyrosine 189 provides a ligand contact to Cu(2+).

This sequence belongs to the polysaccharide monooxygenase AA9 family. Cu(2+) serves as cofactor.

It localises to the secreted. It catalyses the reaction [(1-&gt;4)-beta-D-glucosyl]n+m + reduced acceptor + O2 = 4-dehydro-beta-D-glucosyl-[(1-&gt;4)-beta-D-glucosyl]n-1 + [(1-&gt;4)-beta-D-glucosyl]m + acceptor + H2O.. Its function is as follows. Lytic polysaccharide monooxygenase (LPMO) that depolymerizes crystalline and amorphous polysaccharides via the oxidation of scissile alpha- or beta-(1-4)-glycosidic bonds, yielding C1 or C4 oxidation products. Catalysis by LPMOs requires the reduction of the active-site copper from Cu(II) to Cu(I) by a reducing agent and H(2)O(2) or O(2) as a cosubstrate. Active on hemicelluloses, including xylan, glucomannan, and xyloglucan. Shows clear activity on cellooligosaccharides, generating C4 oxidation products. Has no activity on ivory nut mannan (INM), a linear beta-1,4-linked mannan without substitutions. In Malbranchea cinnamomea (Thermophilic fungus), this protein is AA9 family lytic polysaccharide monooxygenase F.